Consider the following 505-residue polypeptide: DNA primase large subunit (505 aa).

The interdomain linker stretch occupies residues 253–270 (LSHSYTGQDYSTQKNTGK). Residues 266–503 (KNTGKISLDQ…LEMDLEGLEE (238 aa)) form an interacts with PRIM1 region. Positions 287, 367, 384, and 424 each coordinate [4Fe-4S] cluster. The segment at 300-442 (HLRHGGRMQY…NVDDCGFSLN (143 aa)) is RNA:DNA duplex binding. Residues 463-486 (KEISQPETPQHKPSTQKTRDAASA) are disordered. A compositionally biased stretch (polar residues) spans 467–478 (QPETPQHKPSTQ). Threonine 470 is subject to Phosphothreonine.

This sequence belongs to the eukaryotic-type primase large subunit family. As to quaternary structure, heterodimer of a catalytic subunit PRIM1 and a regulatory subunit PRIM2, also known as the DNA primase complex. Interacts via (C-terminus) with PRIM1. Component of the alpha DNA polymerase complex (also known as the alpha DNA polymerase-primase complex) consisting of four subunits: the catalytic subunit POLA1, the regulatory subunit POLA2, and the primase complex subunits PRIM1 and PRIM2 respectively. Within the complex, POLA1 directly interacts with PRIM2. The cofactor is [4Fe-4S] cluster.

Its function is as follows. Regulatory subunit of the DNA primase complex and component of the DNA polymerase alpha complex (also known as the alpha DNA polymerase-primase complex) which play an essential role in the initiation of DNA synthesis. During the S phase of the cell cycle, the DNA polymerase alpha complex (composed of a catalytic subunit POLA1, an accessory subunit POLA2 and two primase subunits, the catalytic subunit PRIM1 and the regulatory subunit PRIM2) is recruited to DNA at the replicative forks via direct interactions with MCM10 and WDHD1. The primase subunit of the polymerase alpha complex initiates DNA synthesis by oligomerising short RNA primers on both leading and lagging strands. These primers are initially extended by the polymerase alpha catalytic subunit and subsequently transferred to polymerase delta and polymerase epsilon for processive synthesis on the lagging and leading strand, respectively. In the primase complex, both subunits are necessary for the initial di-nucleotide formation, but the extension of the primer depends only on the catalytic subunit. Binds RNA:DNA duplex and coordinates the catalytic activities of PRIM1 and POLA2 during primase-to-polymerase switch. The chain is DNA primase large subunit (Prim2) from Mus musculus (Mouse).